Here is a 915-residue protein sequence, read N- to C-terminus: DNA (cytosine-5)-methyltransferase 2 (915 aa).

The span at 1-14 shows a compositional bias: low complexity; sequence MAPSSPSSARPTRA. The segment at 1–171 is disordered; the sequence is MAPSSPSSAR…STAANKPEED (171 aa). Over residues 15–30 the composition is skewed to basic and acidic residues; the sequence is SGRERSAMAEEIHQNQ. Positions 42-57 are enriched in basic residues; sequence AKRRRKAASSGKKPKP. The span at 71–80 shows a compositional bias: basic and acidic residues; the sequence is KKGETEKTEP. The segment covering 81–108 has biased composition (acidic residues); that stretch reads VVDDVCAEEPDEEELAMGEEEAEAEEQA. The segment covering 109 to 119 has biased composition (low complexity); that stretch reads MQEVVAAVAAG. The BAH domain maps to 188-313; sequence IVYCLGDDVY…VAYSTFANIS (126 aa). Residues 315 to 328 are compositionally biased toward polar residues; the sequence is ENGQSGSETASGIS. Positions 315–338 are disordered; that stretch reads ENGQSGSETASGISSDDAGLETSS. The region spanning 345–876 is the SAM-dependent MTase C5-type domain; sequence ATLLDLYSGC…YCLGQAYLGE (532 aa). Positions 445 to 508 constitute a Chromo domain; that stretch reads FVVQKLIGIR…EGRKRKILPL (64 aa). Residue C521 is part of the active site.

It belongs to the class I-like SAM-binding methyltransferase superfamily. C5-methyltransferase family.

The protein localises to the nucleus. It catalyses the reaction a 2'-deoxycytidine in DNA + S-adenosyl-L-methionine = a 5-methyl-2'-deoxycytidine in DNA + S-adenosyl-L-homocysteine + H(+). In terms of biological role, may be involved in the CpXpG methylation and in gene silencing. This chain is DNA (cytosine-5)-methyltransferase 2 (ZMET5), found in Zea mays (Maize).